A 781-amino-acid polypeptide reads, in one-letter code: MKKDEKNNMDESLEEYDEENYTSELDDLPEYERELILAKRHEEYMKKKHRRMLLKNLHIDEKSKGNIHDDTNKSIETSNKRKGKLNNKKLKLKKKLYESDEEEENDKNDKNDDDQYDNTYQSDEDRKKSNNKKKEQSKKIKGDNESYNIDSISYVKYKKGKIKILEDDDEKNHEDEKKKTDIIDHVSVTDDSYTDSSYKNKKKSKYKKGDTNQTDKTSKKNKNDKTNKTNKTNVSIKTKKHREDYSDDSMDDYHSTSSYEHEKSSDVHYNKKEKKIQLKVISEESHLDNTKNKTGKGLNKILIEKEKKKKKKDLHIVDSVHKNKEDGKNVITDIFEKNEKINKDKELELPQTPERLIHLYKEEKKIKMDIYNYMTYDIITYFQLKKTFLLDMCEHVHFSYHVIGHMIKIIDISKLNKVTNQDVQNTNNKKKIDTANENKKKIFFITNVIKSEPYFSTDRNTNIKFEVAHLENLAHSKFFKKIKNIMYQNKKISMDEIKSNEYYETYICDMNNISDQKFTIDEYNHIKLFSIDLDVLKTFHLFLKEKNEDLKNFRYTEKQLQDLFEKKKQKSFYEIYTNNKSIDNLPITRITVQREICSIQREIDKLNFDKKKTNVNDTYTLSKLNNQINELTKKINILRGNLDKARKNHAAMKSNDQFAQEKNMTKEKSRTNIKSTQKDDATNKFLGVKEMDISYFSKQIYDEKTNFNNMLSSKFINLPLDVHHKVVHHFLLGTIQNNDAVFYDDPSHKIKKELDAEIDKLLGLHGNRHITLFDDIKKNYE.

2 disordered regions span residues 1–27 and 56–268; these read MKKD…ELDD and NLHI…SDVH. Positions 11 to 27 are enriched in acidic residues; it reads ESLEEYDEENYTSELDD. The span at 57 to 73 shows a compositional bias: basic and acidic residues; the sequence is LHIDEKSKGNIHDDTNK. Positions 80–94 are enriched in basic residues; sequence KRKGKLNNKKLKLKK. The segment covering 99 to 116 has biased composition (acidic residues); it reads SDEEEENDKNDKNDDDQY. Composition is skewed to basic and acidic residues over residues 123–144, 170–188, 216–227, and 251–268; these read DEDR…KGDN, EKNH…HVSV, KTSKKNKNDKTN, and DDYH…SDVH. Positions 616-655 form a coiled coil; the sequence is NDTYTLSKLNNQINELTKKINILRGNLDKARKNHAAMKSN.

This is an uncharacterized protein from Plasmodium falciparum (isolate 3D7).